The following is a 181-amino-acid chain: MKASISIDEKKDFIRWFLNKHQMKTREAMWVLNYIAGHDQIVKYVHFVDNLEGCARGLSLSAHGVESEPFLFFKGNIMTTDPEKAFHDIRLNWDEELYVELHFEEAITSPEYALVREDNPFTAVKLADEEKEMADALIYQSVHQFSREKVLQQIDEALDARDEVTFHKLVRILQQMDTVKE.

This sequence belongs to the UPF0302 family.

This chain is UPF0302 protein LMHCC_0635, found in Listeria monocytogenes serotype 4a (strain HCC23).